The sequence spans 72 residues: Translation initiation factor IF-1 (72 aa).

Positions 1–72 (MSKEELIEFE…TKGRITYRFK (72 aa)) constitute an S1-like domain.

The protein belongs to the IF-1 family. Component of the 30S ribosomal translation pre-initiation complex which assembles on the 30S ribosome in the order IF-2 and IF-3, IF-1 and N-formylmethionyl-tRNA(fMet); mRNA recruitment can occur at any time during PIC assembly.

It localises to the cytoplasm. In terms of biological role, one of the essential components for the initiation of protein synthesis. Stabilizes the binding of IF-2 and IF-3 on the 30S subunit to which N-formylmethionyl-tRNA(fMet) subsequently binds. Helps modulate mRNA selection, yielding the 30S pre-initiation complex (PIC). Upon addition of the 50S ribosomal subunit IF-1, IF-2 and IF-3 are released leaving the mature 70S translation initiation complex. This is Translation initiation factor IF-1 from Hyphomonas neptunium (strain ATCC 15444).